We begin with the raw amino-acid sequence, 582 residues long: V-type ATP synthase alpha chain (582 aa).

231 to 238 (GPFGSGKT) is an ATP binding site.

This sequence belongs to the ATPase alpha/beta chains family.

The catalysed reaction is ATP + H2O + 4 H(+)(in) = ADP + phosphate + 5 H(+)(out). Its function is as follows. Produces ATP from ADP in the presence of a proton gradient across the membrane. The V-type alpha chain is a catalytic subunit. In Deinococcus deserti (strain DSM 17065 / CIP 109153 / LMG 22923 / VCD115), this protein is V-type ATP synthase alpha chain.